Reading from the N-terminus, the 458-residue chain is Probable plasmid replicative DNA helicase (458 aa).

The SF4 helicase domain occupies 194-458; the sequence is KIDYVDGLPT…GKFTIQKEAW (265 aa). 225-232 is an ATP binding site; it reads ARPAMGKT.

The protein belongs to the helicase family. DnaB subfamily. Homohexamer.

It carries out the reaction Couples ATP hydrolysis with the unwinding of duplex DNA at the replication fork by translocating in the 5'-3' direction. This creates two antiparallel DNA single strands (ssDNA). The leading ssDNA polymer is the template for DNA polymerase III holoenzyme which synthesizes a continuous strand.. It catalyses the reaction ATP + H2O = ADP + phosphate + H(+). Functionally, a replicative DNA helicase, it participates in initiation and elongation during DNA replication. Travels ahead of the DNA replisome, separating dsDNA into templates for DNA synthesis. A processive ATP-dependent 5'-3' DNA helicase it has DNA-dependent ATPase activity. The sequence is that of Probable plasmid replicative DNA helicase from Chlamydia psittaci (Chlamydophila psittaci).